A 533-amino-acid chain; its full sequence is Probable ADP-ribosylation factor-binding protein C25H2.16c (533 aa).

The VHS domain maps to 15-151; that stretch reads ATEPYAFEPD…LLSYKGYTFP (137 aa). One can recognise a GAT domain in the interval 178 to 305; that stretch reads REAMSAKLQE…LLTQYDHLLE (128 aa). Position 320 is a phosphoserine (Ser320). Positions 417–532 constitute a GAE domain; that stretch reads NNFTSTCAFE…EYTGQSSIRL (116 aa).

This sequence belongs to the GGA protein family.

Its subcellular location is the golgi apparatus. The protein resides in the trans-Golgi network. Its function is as follows. May play a role in the regulation of membrane traffic through the trans-Golgi network. The sequence is that of Probable ADP-ribosylation factor-binding protein C25H2.16c from Schizosaccharomyces pombe (strain 972 / ATCC 24843) (Fission yeast).